A 222-amino-acid chain; its full sequence is Glutathione-specific gamma-glutamylcyclotransferase 1 (222 aa).

A compositionally biased stretch (low complexity) spans 1-22 (MKQESAAPNTPPTSQSPTPSAQ). The disordered stretch occupies residues 1–24 (MKQESAAPNTPPTSQSPTPSAQFP). Residue 35 to 40 (IFGYGS) participates in substrate binding. The Proton acceptor role is filled by E115.

This sequence belongs to the gamma-glutamylcyclotransferase family. ChaC subfamily. Interacts with NOTCH1 (via extracellular region).

It is found in the cytoplasm. It localises to the cytosol. The protein localises to the golgi apparatus. Its subcellular location is the trans-Golgi network. It carries out the reaction glutathione = L-cysteinylglycine + 5-oxo-L-proline. Catalyzes the cleavage of glutathione into 5-oxo-L-proline and a Cys-Gly dipeptide. Acts specifically on glutathione, but not on other gamma-glutamyl peptides. Glutathione depletion is an important factor for apoptosis initiation and execution. Acts as a pro-apoptotic component of the unfolded protein response pathway by mediating the pro-apoptotic effects of the ATF4-ATF3-DDIT3/CHOP cascade. Negative regulator of Notch signaling pathway involved in embryonic neurogenesis: acts by inhibiting Notch cleavage by furin, maintaining Notch in an immature inactive form, thereby promoting neurogenesis in embryos. The protein is Glutathione-specific gamma-glutamylcyclotransferase 1 of Homo sapiens (Human).